The sequence spans 339 residues: Transcription factor IIIA (339 aa).

9 C2H2-type zinc fingers span residues Phe-12 to His-36, Phe-42 to His-66, Cys-72 to His-97, Tyr-104 to His-128, Phe-134 to His-158, Tyr-161 to His-187, Val-190 to His-212, Tyr-219 to His-244, and Phe-250 to His-274. The disordered stretch occupies residues Phe-271–Lys-339. A compositionally biased stretch (basic residues) spans Lys-299–Pro-309. Residues Gln-311–Asp-323 show a composition bias toward polar residues.

The protein resides in the nucleus. Involved in ribosomal large subunit biogenesis. Interacts with the internal control region (ICR) of approximately 50 bases within the 5S RNA genes, is required for correct transcription of these genes by RNA polymerase III. Also binds the transcribed 5S RNA's. The sequence is that of Transcription factor IIIA (gtf3a) from Anaxyrus americanus (American toad).